We begin with the raw amino-acid sequence, 91 residues long: Large ribosomal subunit protein uL23c (91 aa).

Belongs to the universal ribosomal protein uL23 family. As to quaternary structure, part of the 50S ribosomal subunit.

It localises to the plastid. The protein resides in the chloroplast. Functionally, binds to 23S rRNA. In Pinus thunbergii (Japanese black pine), this protein is Large ribosomal subunit protein uL23c (rpl23).